The primary structure comprises 129 residues: UPF0344 protein SSP1805 (129 aa).

4 helical membrane passes run 1 to 21 (MLHM…AAYF), 36 to 56 (IHML…WVWI), 68 to 88 (MLLT…EVTI), and 100 to 120 (LMWT…ILPM).

The protein belongs to the UPF0344 family.

The protein localises to the cell membrane. The polypeptide is UPF0344 protein SSP1805 (Staphylococcus saprophyticus subsp. saprophyticus (strain ATCC 15305 / DSM 20229 / NCIMB 8711 / NCTC 7292 / S-41)).